The primary structure comprises 255 residues: Ciliogenesis and planar polarity effector 2 (255 aa).

Positions 52–255 are small GTPase-like; it reads PADIASYKLF…VIAGLVGGAD (204 aa). Residues 64–71 and 177–180 each bind GTP; these read GRSGAGKT and TKLD.

Belongs to the small GTPase superfamily. Rab family.

It localises to the cytoplasm. The protein resides in the cytoskeleton. The protein localises to the cilium basal body. Potential effector of the planar cell polarity signaling pathway. Plays a role in targeted membrane trafficking most probably at the level of vesicle fusion with membranes. Involved in cilium biogenesis by regulating the transport of cargo proteins to the basal body and to the apical tips of cilia. More generally involved in exocytosis in secretory cells. This is Ciliogenesis and planar polarity effector 2 (cplane2) from Xenopus tropicalis (Western clawed frog).